The chain runs to 542 residues: CTP synthase (542 aa).

The amidoligase domain stretch occupies residues 1 to 265 (MTRYIFVTGG…DDFVVERFGL (265 aa)). CTP is bound at residue Ser-13. Ser-13 provides a ligand contact to UTP. Residues 14–19 (SLGKGI) and Asp-71 each bind ATP. Positions 71 and 139 each coordinate Mg(2+). Residues 146–148 (DIE), 186–191 (KTKPTQ), and Lys-222 contribute to the CTP site. UTP-binding positions include 186-191 (KTKPTQ) and Lys-222. The Glutamine amidotransferase type-1 domain maps to 290 to 541 (TIAMVGKYME…VKAALAQKNK (252 aa)). An L-glutamine-binding site is contributed by Gly-351. The active-site Nucleophile; for glutamine hydrolysis is Cys-378. L-glutamine is bound by residues 379–382 (LGMQ), Glu-402, and Arg-469. Catalysis depends on residues His-514 and Glu-516.

Belongs to the CTP synthase family. As to quaternary structure, homotetramer.

It catalyses the reaction UTP + L-glutamine + ATP + H2O = CTP + L-glutamate + ADP + phosphate + 2 H(+). It carries out the reaction L-glutamine + H2O = L-glutamate + NH4(+). The catalysed reaction is UTP + NH4(+) + ATP = CTP + ADP + phosphate + 2 H(+). Its pathway is pyrimidine metabolism; CTP biosynthesis via de novo pathway; CTP from UDP: step 2/2. With respect to regulation, allosterically activated by GTP, when glutamine is the substrate; GTP has no effect on the reaction when ammonia is the substrate. The allosteric effector GTP functions by stabilizing the protein conformation that binds the tetrahedral intermediate(s) formed during glutamine hydrolysis. Inhibited by the product CTP, via allosteric rather than competitive inhibition. In terms of biological role, catalyzes the ATP-dependent amination of UTP to CTP with either L-glutamine or ammonia as the source of nitrogen. Regulates intracellular CTP levels through interactions with the four ribonucleotide triphosphates. The sequence is that of CTP synthase from Pseudomonas putida (strain GB-1).